Consider the following 318-residue polypeptide: Coproporphyrin III ferrochelatase (318 aa).

Fe(2+) is bound by residues His-186 and Glu-268.

The protein belongs to the ferrochelatase family.

Its subcellular location is the cytoplasm. It carries out the reaction Fe-coproporphyrin III + 2 H(+) = coproporphyrin III + Fe(2+). The protein operates within porphyrin-containing compound metabolism; protoheme biosynthesis. Its function is as follows. Involved in coproporphyrin-dependent heme b biosynthesis. Catalyzes the insertion of ferrous iron into coproporphyrin III to form Fe-coproporphyrin III. The sequence is that of Coproporphyrin III ferrochelatase from Lactococcus lactis subsp. cremoris (strain SK11).